The following is a 291-amino-acid chain: MVNSQVADKEKLDAQTNNQDSVATIVTTENNKKYTIPDSEKKIVYSTQNLDLWYGENHALQNINLDILENNVTAIIGPSGCGKSTYIKALNRMVELVPSVKTAGKILYRDQNIFDAKYSKEKLRTNVGMVFQQPNPFPKSIYDNITYGPKTHGIKNKKILDEIVEKSLRGAAIWDELKDRLHTNAYGLSGGQQQRVCIARCLAIEPDVILMDEPTSALDPISTLRVEELVQELKENYSIIMVTHNMQQAARVSDKTAFFLNGYVNEYDDTDKIFSNPADKQTEDYISGRFG.

The ABC transporter domain occupies 45 to 286 (YSTQNLDLWY…PADKQTEDYI (242 aa)). Residue 77–84 (GPSGCGKS) coordinates ATP.

Belongs to the ABC transporter superfamily. Phosphate importer (TC 3.A.1.7) family. The complex is composed of two ATP-binding proteins (PstB), two transmembrane proteins (PstC and PstA) and a solute-binding protein (PstS).

It is found in the cell membrane. It catalyses the reaction phosphate(out) + ATP + H2O = ADP + 2 phosphate(in) + H(+). Functionally, part of the ABC transporter complex PstSACB involved in phosphate import. Responsible for energy coupling to the transport system. This is Phosphate import ATP-binding protein PstB from Staphylococcus epidermidis (strain ATCC 35984 / DSM 28319 / BCRC 17069 / CCUG 31568 / BM 3577 / RP62A).